The sequence spans 159 residues: Small ribosomal subunit protein uS4 (159 aa).

Residues 106-158 (RRLQTIVYRKGLAKSIYHARQLVVHGHVAVAGRRVTSPGFLVPRDLEDKITLI) form the S4 RNA-binding domain.

The protein belongs to the universal ribosomal protein uS4 family. As to quaternary structure, part of the 30S ribosomal subunit. Contacts protein S5. The interaction surface between S4 and S5 is involved in control of translational fidelity.

One of the primary rRNA binding proteins, it binds directly to 16S rRNA where it nucleates assembly of the body of the 30S subunit. In terms of biological role, with S5 and S12 plays an important role in translational accuracy. This Pyrobaculum islandicum (strain DSM 4184 / JCM 9189 / GEO3) protein is Small ribosomal subunit protein uS4.